An 802-amino-acid chain; its full sequence is Acetyl-CoA decarbonylase/synthase complex subunit alpha 1 (802 aa).

Positions 68, 71, 76, and 86 each coordinate [4Fe-4S] cluster. Histidine 109 is a CO binding site. Histidine 243, cysteine 271, and cysteine 310 together coordinate [Ni-4Fe-4S] cluster. 2 4Fe-4S ferredoxin-type domains span residues 395–424 (DEALMEEINKCTQCMNCVFTCPHSLRVDQG) and 435–464 (SKLAQLEEQCLACMKCEQACPKNIKIINVI). Residues cysteine 405, cysteine 408, cysteine 411, cysteine 415, cysteine 444, cysteine 447, cysteine 450, and cysteine 454 each coordinate [4Fe-4S] cluster. 3 residues coordinate [Ni-4Fe-4S] cluster: cysteine 512, cysteine 541, and cysteine 576.

Belongs to the Ni-containing carbon monoxide dehydrogenase family. Heterotetramer of two alpha and two epsilon subunits. The ACDS complex is made up of alpha, epsilon, beta, gamma and delta subunits with a probable stoichiometry of (alpha(2)epsilon(2))(4)-beta(8)-(gamma(1)delta(1))(8). [4Fe-4S] cluster serves as cofactor. Requires [Ni-4Fe-4S] cluster as cofactor.

It carries out the reaction CO + 2 oxidized [2Fe-2S]-[ferredoxin] + H2O = 2 reduced [2Fe-2S]-[ferredoxin] + CO2 + 2 H(+). Part of the ACDS complex that catalyzes the reversible cleavage of acetyl-CoA, allowing autotrophic growth from CO(2). The alpha-epsilon subcomponent functions as a carbon monoxide dehydrogenase. The protein is Acetyl-CoA decarbonylase/synthase complex subunit alpha 1 of Archaeoglobus fulgidus (strain ATCC 49558 / DSM 4304 / JCM 9628 / NBRC 100126 / VC-16).